A 216-amino-acid chain; its full sequence is MOB kinase activator 1A (216 aa).

An N-acetylserine modification is found at Ser2. Thr12 and Thr35 each carry phosphothreonine. A Phosphothreonine; by STK3/MST2 modification is found at Thr74. Residues Cys79, Cys84, His161, and His166 each coordinate Zn(2+). Position 181 is a phosphothreonine (Thr181).

This sequence belongs to the MOB1/phocein family. In terms of assembly, binds STK38 and STK38L. Interacts with LATS1 and LATS2. Forms a tripartite complex with STK38 and STK3/MST2. Post-translationally, phosphorylated by STK3/MST2 and STK4/MST1 and this phosphorylation enhances its binding to LATS1. Adrenal gland, bone marrow, brain, placenta, prostate, salivary gland, skeletal muscle, testis, thymus, thyroid gland, heart, spinal cord, fetal brain and fetal liver.

Functionally, activator of LATS1/2 in the Hippo signaling pathway which plays a pivotal role in organ size control and tumor suppression by restricting proliferation and promoting apoptosis. The core of this pathway is composed of a kinase cascade wherein STK3/MST2 and STK4/MST1, in complex with its regulatory protein SAV1, phosphorylates and activates LATS1/2 in complex with its regulatory protein MOB1, which in turn phosphorylates and inactivates YAP1 oncoprotein and WWTR1/TAZ. Phosphorylation of YAP1 by LATS1/2 inhibits its translocation into the nucleus to regulate cellular genes important for cell proliferation, cell death, and cell migration. Stimulates the kinase activity of STK38 and STK38L. Acts cooperatively with STK3/MST2 to activate STK38. This is MOB kinase activator 1A from Homo sapiens (Human).